Consider the following 151-residue polypeptide: Large ribosomal subunit protein uL15 (151 aa).

Residues 1 to 60 (MAENSPLKAHNLRPAPGAKTAKTRVGRGEASKGKTAGRGTKGTKARYQVPERFEGGQMPL) are disordered.

The protein belongs to the universal ribosomal protein uL15 family. As to quaternary structure, part of the 50S ribosomal subunit.

Its function is as follows. Binds to the 23S rRNA. The protein is Large ribosomal subunit protein uL15 of Streptomyces griseus subsp. griseus (strain JCM 4626 / CBS 651.72 / NBRC 13350 / KCC S-0626 / ISP 5235).